The sequence spans 233 residues: Phycoerythrobilin synthase (233 aa).

It belongs to the HY2 family.

The enzyme catalyses (3Z)-phycoerythrobilin + 2 oxidized 2[4Fe-4S]-[ferredoxin] = biliverdin IXalpha + 2 reduced 2[4Fe-4S]-[ferredoxin] + 4 H(+). Its function is as follows. Plays a role in phycoerythrobilin biosynthesis, the red pigment chromophore photosynthetically active biliproteins of the host cyanobacteria. Uses a four-electron reduction to carry out the reactions catalyzed by two enzymes (EC 1.3.7.2 and EC 1.3.7.3) in host. This chain is Phycoerythrobilin synthase (pebS), found in Prochlorococcus.